The chain runs to 122 residues: MIQQESRLRVADNTGAKEILCIRVLGGSSRRYAGIGDIIVATVKDAIPGGNIKKGEVVKAVIVRTTKERRRPDGSYIKFDENAAVLIKPDNDPRGTRIFGPVGRELREKKFMKIVSLAPEVL.

Belongs to the universal ribosomal protein uL14 family. In terms of assembly, part of the 50S ribosomal subunit. Forms a cluster with proteins L3 and L19. In the 70S ribosome, L14 and L19 interact and together make contacts with the 16S rRNA in bridges B5 and B8.

Its function is as follows. Binds to 23S rRNA. Forms part of two intersubunit bridges in the 70S ribosome. This is Large ribosomal subunit protein uL14 from Rhodococcus jostii (strain RHA1).